The sequence spans 128 residues: MKQQVEVRQLREGGYVVIDDEPCEILSISVSKPGKHGAAKARIDAIGIFDSQKRSIVQPVTAKIYVPIVERKRAQIISVTGNVAQLMDLETYETFELEVPEELKDKMEQGREVIYLESLGKRKIERMA.

Lysine 35 carries the post-translational modification Hypusine.

The protein belongs to the eIF-5A family.

The protein localises to the cytoplasm. Its function is as follows. Functions by promoting the formation of the first peptide bond. The chain is Translation initiation factor 5A (eif5a) from Archaeoglobus fulgidus (strain ATCC 49558 / DSM 4304 / JCM 9628 / NBRC 100126 / VC-16).